The chain runs to 549 residues: Leiomodin-2 (549 aa).

A tropomyosin-binding region spans residues 1-42 (MSTFGYRRGLSKYESIDEDELLASLTAEELKELERELEDIEP). An interaction with tropomyosin alpha region spans residues 1–47 (MSTFGYRRGLSKYESIDEDELLASLTAEELKELERELEDIEPDRNLP). Interaction with actin regions lie at residues 1-164 (MSTF…PDNS), 165-499 (KPKT…KEIK), and 523-542 (AHEN…LRRV). 3 positions are modified to phosphoserine: Ser-11, Ser-15, and Ser-24. Disordered regions lie at residues 91–166 (KLAE…NSKP), 179–200 (TNGN…HPCG), 358–455 (MDKQ…PGKK), and 469–534 (ESAQ…IRGS). 2 stretches are compositionally biased toward acidic residues: residues 95 to 105 (EDKEESEEELI) and 113 to 143 (VSEE…EEVT). Polar residues-rich tracts occupy residues 150 to 163 (INGT…NPDN) and 179 to 192 (TNGN…NTES). Positions 358–376 (MDKQRQKRMQEQKQQEGHD) are enriched in basic and acidic residues. Residues 390 to 401 (TPGSSPYASPRQ) are compositionally biased toward polar residues. Ser-406 is modified (phosphoserine). The span at 420 to 452 (PPSPVAPPPPPPPPPLPPHMLPPPPPPPAPPLP) shows a compositional bias: pro residues. A coiled-coil region spans residues 457 to 515 (ITRNIAEVIKQQESAQRALQNGQRKKKGKKVKKQPNNILKEIKNSLRSVQEKKMEESSR). Residues 469–478 (ESAQRALQNG) show a composition bias toward polar residues. Positions 479-489 (QRKKKGKKVKK) are enriched in basic residues. Residues 496–514 (KEIKNSLRSVQEKKMEESS) are compositionally biased toward basic and acidic residues. Residues 523–542 (AHENLMEAIRGSSIRQLRRV) enclose the WH2 domain.

The protein belongs to the tropomodulin family. As to quaternary structure, can bind at least three actin monomers and thereby provides a nucleus for actin filament formation. Interacts (via N-terminus) with tropomyosin alpha (TPM1) (via N-terminus). May also interact with TPM2 (via N-terminus). Interacts with FLII.

Its subcellular location is the cytoplasm. It localises to the myofibril. The protein localises to the sarcomere. The protein resides in the m line. It is found in the cytoskeleton. Its function is as follows. Mediates nucleation of actin filaments and thereby promotes actin polymerization. Plays a role in the regulation of actin filament length. Required for normal sarcomere organization in the heart, and for normal heart function. The chain is Leiomodin-2 (Lmod2) from Rattus norvegicus (Rat).